A 182-amino-acid polypeptide reads, in one-letter code: Transmembrane and coiled-coil domain-containing protein 2 (182 aa).

2 consecutive transmembrane segments (helical) span residues 10-30 and 50-70; these read IIIDYLSLSSIWNYLQATLLG and VQVILGISFLILLGVGMYALW. Residues 122 to 149 adopt a coiled-coil conformation; sequence GLQEKILKKLQTVENKVKDLEGMIISQK.

It is found in the membrane. The chain is Transmembrane and coiled-coil domain-containing protein 2 (TMCO2) from Bos taurus (Bovine).